Consider the following 678-residue polypeptide: MVPSTFSRLKAARCLPVVLAALIFAGCGTHTPDQSTAYMQGTAQADSAFYLQQMQQSSDDTRINWQLLAIRALVKEGKTGQAVELFNQLPQELNDTQRREKTLLAAEIKLAQKDFAGAQNLLAKITPADLEQNQQARYWQAKIDASQGRPSIDLLRALIAQEPLLGAKEKQQNIDATWQALSSMTQEQANTLVINADENILQGWLDLQRVWFDNRNDPDMMKAGIADWQKRYPNNPGAKMLPTQLVNVKAFKPASTNKIALLLPLNGQAAVFGRTIQQGFEAAKNIGTQPVVAQVAAAPAADVAEQPQPQTVDGVASPAQASVSDLTGEQPAAQSVPVSAPATSTAAVSAPANPSAELKIYDTSSQPLSQILSQVQQDGASIVVGPLLKNNVEELLKSNTPLNVLALNQPENIENRVNICYFALSPEDEARDAARHIRDQGKQAPLVLIPRSSLGDRVANAFAQEWQKLGGGTVLQQKFGSTSELRAGVNGGSGIALTGSPITPRETTDSGMTTNNPTLQTTPTDDQFTNNGGRVDAVYIVATPGEIAFIKPMIAMRNGSQSGATLYASSRSAQGTAGPDFRLEMEGLQYSEIPMLAGGNLPLMQQALSAVNNDYSLARMYAMGVDAWSLANHFSQMRQVQGFEINGNTGSLTANPDCVINRKLSWLQYQQGQVVPAS.

The N-terminal stretch at 1-26 (MVPSTFSRLKAARCLPVVLAALIFAG) is a signal peptide. Residue Cys27 is the site of N-palmitoyl cysteine attachment. Cys27 carries S-diacylglycerol cysteine lipidation. Disordered stretches follow at residues 304–338 (AEQP…SVPV) and 495–530 (IALT…QFTN). Residues 513–529 (TTNNPTLQTTPTDDQFT) show a composition bias toward low complexity.

This sequence belongs to the LpoA family. Interacts with PBP1a.

The protein resides in the cell outer membrane. In terms of biological role, regulator of peptidoglycan synthesis that is essential for the function of penicillin-binding protein 1A (PBP1a). The protein is Penicillin-binding protein activator LpoA of Escherichia coli O6:H1 (strain CFT073 / ATCC 700928 / UPEC).